Consider the following 1208-residue polypeptide: Chromosome partition protein Smc (1208 aa).

ATP is bound at residue 32–39 (PNGCGKSN). Coiled coils occupy residues 170–205 (VTKY…GERI), 239–504 (EARA…ARVQ), and 694–1054 (VIER…QLQD).

This sequence belongs to the SMC family. As to quaternary structure, homodimer.

It localises to the cytoplasm. In terms of biological role, required for chromosome condensation and partitioning. The polypeptide is Chromosome partition protein Smc (Thauera aminoaromatica).